The chain runs to 334 residues: MNNSNLAAARNLIQVVTGEWKSRCVYVATRLGLADLIESGIDSDETLAAAVGSDAERIHRLMRLLVAFEIFQGDTRDGYANTPTSHLLRDVEGSFRDMVLFYGEEFHAAWTPACEALLSGTPGFELAFGEDFYSYLKRCPDAGRRFLLAMKASNLAFHEIPRLLDFRGRSFVDVGGGSGELTKAILQAEPSARGVMLDREGSLGVARDNLSSLLAGERVSLVGGDMLQEVPSNGDIYLLSRIIGDLDEAASLRLLGNCREAMAGDGRVVVIERTISASEPSPMSVLWDVHLFMACAGRHRTTEEVVDLLGRGGFAVERIVDLPMETRMIVAARA.

Positions 198 and 241 each coordinate S-adenosyl-L-methionine.

This sequence belongs to the class I-like SAM-binding methyltransferase superfamily. Cation-independent O-methyltransferase family. In terms of assembly, homodimer in solution. Probably interacts transiently with PhzS.

The catalysed reaction is phenazine-1-carboxylate + S-adenosyl-L-methionine = 5-methyl-phenazine-1-carboxylate + S-adenosyl-L-homocysteine. Its pathway is secondary metabolite biosynthesis; pyocyanine biosynthesis. In vitro, requires PhzS for activity. Involved in the biosynthesis of pyocyanine, a blue-pigmented phenazine derivative, which plays a role in virulence. Converts phenazine-1-carboxylate (PCA) to 5-methylphenazine-1-carboxylate (5-methyl-PCA). The chain is Phenazine-1-carboxylate N-methyltransferase from Pseudomonas aeruginosa (strain ATCC 15692 / DSM 22644 / CIP 104116 / JCM 14847 / LMG 12228 / 1C / PRS 101 / PAO1).